The sequence spans 103 residues: Stefin-2 (103 aa).

The Secondary area of contact signature appears at glutamine 52–glycine 56.

It belongs to the cystatin family.

It is found in the cytoplasm. In terms of biological role, this is an intracellular thiol proteinase inhibitor. The chain is Stefin-2 (Stfa2) from Mus musculus (Mouse).